The primary structure comprises 459 residues: Protein U54 (459 aa).

The signal sequence occupies residues 1–20 (MQPATLQWSSYVLQLRLTTA). N-linked (GlcNAc...) asparagine; by host glycans are attached at residues asparagine 76, asparagine 100, asparagine 281, asparagine 321, and asparagine 452.

This sequence belongs to the herpesviridae UL82 family.

This chain is Protein U54 (U54), found in Homo sapiens (Human).